Reading from the N-terminus, the 96-residue chain is Large ribosomal subunit protein bL21 (96 aa).

This sequence belongs to the bacterial ribosomal protein bL21 family. In terms of assembly, part of the 50S ribosomal subunit. Contacts protein L20.

Its function is as follows. This protein binds to 23S rRNA in the presence of protein L20. The chain is Large ribosomal subunit protein bL21 from Chlorobium phaeobacteroides (strain BS1).